The following is a 326-amino-acid chain: Pyruvate dehydrogenase E1 component subunit beta (326 aa).

Glu-59 contributes to the thiamine diphosphate binding site.

Heterodimer of an alpha and a beta chain. It depends on thiamine diphosphate as a cofactor.

It carries out the reaction N(6)-[(R)-lipoyl]-L-lysyl-[protein] + pyruvate + H(+) = N(6)-[(R)-S(8)-acetyldihydrolipoyl]-L-lysyl-[protein] + CO2. In terms of biological role, the pyruvate dehydrogenase complex catalyzes the overall conversion of pyruvate to acetyl-CoA and CO(2). It contains multiple copies of three enzymatic components: pyruvate dehydrogenase (E1), dihydrolipoamide acetyltransferase (E2) and lipoamide dehydrogenase (E3). This Rickettsia felis (strain ATCC VR-1525 / URRWXCal2) (Rickettsia azadi) protein is Pyruvate dehydrogenase E1 component subunit beta (pdhB).